A 358-amino-acid polypeptide reads, in one-letter code: Alanine racemase (358 aa).

Lys-35 serves as the catalytic Proton acceptor; specific for D-alanine. Lys-35 is modified (N6-(pyridoxal phosphate)lysine). Arg-130 serves as a coordination point for substrate. The active-site Proton acceptor; specific for L-alanine is Tyr-255. Residue Met-303 participates in substrate binding.

Belongs to the alanine racemase family. The cofactor is pyridoxal 5'-phosphate.

The catalysed reaction is L-alanine = D-alanine. Its pathway is amino-acid biosynthesis; D-alanine biosynthesis; D-alanine from L-alanine: step 1/1. In terms of biological role, catalyzes the interconversion of L-alanine and D-alanine. May also act on other amino acids. The chain is Alanine racemase (alr) from Shewanella sp. (strain MR-4).